Here is a 269-residue protein sequence, read N- to C-terminus: Pertussis toxin subunit 1 homolog (269 aa).

An N-terminal signal peptide occupies residues 1–34 (MRCTRAIRQTARTGWLTWLAILAVTAPMTSPAWA).

Belongs to the bacterial exotoxin subunit A family.

This is Pertussis toxin subunit 1 homolog (ptxA) from Bordetella parapertussis (strain 12822 / ATCC BAA-587 / NCTC 13253).